The following is a 101-amino-acid chain: DNA-binding protein Fis (101 aa).

The H-T-H motif DNA-binding region spans 77 to 96 (QTRAANMLGINRGTLRKKLK).

The protein belongs to the transcriptional regulatory Fis family. Homodimer.

Functionally, activates ribosomal RNA transcription. Plays a direct role in upstream activation of rRNA promoters. The chain is DNA-binding protein Fis from Shewanella denitrificans (strain OS217 / ATCC BAA-1090 / DSM 15013).